The following is a 460-amino-acid chain: C4-dicarboxylate transport transcriptional regulatory protein DctD (460 aa).

The region spanning 6–120 is the Response regulatory domain; it reads SVFLIDDDRD…RLVQSARRAE (115 aa). A 4-aspartylphosphate modification is found at Asp-55. In terms of domain architecture, Sigma-54 factor interaction spans 145-374; it reads LIGQTPVMER…LSHFAERVAL (230 aa). Residues 173–180 and 236–245 each bind ATP; these read GETGSGKE and ASGGTLFLDE. Residues 332–345 form an inter-domain linker region; sequence ARASERFGREVPAI. A DNA-binding region (H-T-H motif) is located at residues 417-436; sequence VKETLQALGIPRKTFYDKLQ.

Post-translationally, phosphorylated by DctB.

It localises to the cytoplasm. Member of the two-component regulatory system DctB/DctD involved in the transport of C4-dicarboxylates. When activated by DctB acts in conjunction with sigma-54 to activate the transcription of dctA. The protein is C4-dicarboxylate transport transcriptional regulatory protein DctD (dctD) of Rhizobium meliloti (strain 1021) (Ensifer meliloti).